Consider the following 184-residue polypeptide: Protein C8 (184 aa).

The N-terminal stretch at 1-21 (MSSIRFIACLYLISIFGNCHE) is a signal peptide.

It belongs to the poxviridae C8 protein family.

This chain is Protein C8, found in Vaccinia virus (strain Copenhagen) (VACV).